The chain runs to 345 residues: MSTPTPLSYKDAGVDIDAGNALVSNIKAAVKRTRRPEVMGNLGGFGALCEIPTKYKQPVLVSGTDGVGTKLRLAIDYKKHDTVGIDLVAMCVNDLIVQGAEPLFFLDYYATGKLDVETATSVVNGIGEGCFQSGCALIGGETAEMPGMYEGEDYDLAGFCVGVVEKADIIDGSKVAAGDALIALASSGPHSNGYSLVRKVLEVSQADPQQDLNGKPLIEHLLEPTKIYVKSLLKLIEASDVHAMAHITGGGFWENIPRVLPDNCKAVIQGDSWQWPAVFSWLMENGNIAQYEMYRTFNCGVGMIVALPADKVDAALALLAAEGEQAWLIGAIAHREGNEEQVEIL.

This sequence belongs to the AIR synthase family.

It localises to the cytoplasm. It catalyses the reaction 2-formamido-N(1)-(5-O-phospho-beta-D-ribosyl)acetamidine + ATP = 5-amino-1-(5-phospho-beta-D-ribosyl)imidazole + ADP + phosphate + H(+). It participates in purine metabolism; IMP biosynthesis via de novo pathway; 5-amino-1-(5-phospho-D-ribosyl)imidazole from N(2)-formyl-N(1)-(5-phospho-D-ribosyl)glycinamide: step 2/2. This is Phosphoribosylformylglycinamidine cyclo-ligase from Shewanella putrefaciens (strain CN-32 / ATCC BAA-453).